Reading from the N-terminus, the 350-residue chain is MSTTPLSISRAKKYKTVFKGAAILTTFAALYIVTSPSTGKRLVKNASIKGLYNVSGNDCFLNCVLQSLASQESLLEILKLRCSSSTLYATLYELLQKLNSGPGNPITPGSFLNSLEIATNKKLVRSIQQDAQEFLQHLVETLELQKPHTYKWSKVLSFPVDSPFIGTMEQKVQCCQCLAISISYSTATSIQLCLPPEYSGNSNVSLLSLMEADREQHISDYKCDSCFKSSPKHSKTSCIRTVDWKNPPTILQIQLERTSYTCQGLTRNNVSISFPSKLILKNKHHYILRSLITHSGSVTYGHYLCYRLQDDIWWKANDSLITKSSLNEALSQTRSACLLFYEMESPLALD.

The USP domain maps to 49-344 (KGLYNVSGND…SACLLFYEME (296 aa)). Cysteine 59 functions as the Nucleophile in the catalytic mechanism. Residue histidine 302 is the Proton acceptor of the active site.

The protein belongs to the peptidase C19 family.

The enzyme catalyses Thiol-dependent hydrolysis of ester, thioester, amide, peptide and isopeptide bonds formed by the C-terminal Gly of ubiquitin (a 76-residue protein attached to proteins as an intracellular targeting signal).. The protein is Ubiquitin carboxyl-terminal hydrolase 11 (ubp11) of Schizosaccharomyces pombe (strain 972 / ATCC 24843) (Fission yeast).